The chain runs to 519 residues: Probable cytosol aminopeptidase (519 aa).

Residues lysine 283 and aspartate 288 each coordinate Mn(2+). Lysine 295 is a catalytic residue. Residues aspartate 306, aspartate 365, and glutamate 367 each contribute to the Mn(2+) site. The active site involves arginine 369.

It belongs to the peptidase M17 family. The cofactor is Mn(2+).

Its subcellular location is the cytoplasm. The catalysed reaction is Release of an N-terminal amino acid, Xaa-|-Yaa-, in which Xaa is preferably Leu, but may be other amino acids including Pro although not Arg or Lys, and Yaa may be Pro. Amino acid amides and methyl esters are also readily hydrolyzed, but rates on arylamides are exceedingly low.. It catalyses the reaction Release of an N-terminal amino acid, preferentially leucine, but not glutamic or aspartic acids.. Its function is as follows. Presumably involved in the processing and regular turnover of intracellular proteins. Catalyzes the removal of unsubstituted N-terminal amino acids from various peptides. The chain is Probable cytosol aminopeptidase from Mycobacterium ulcerans (strain Agy99).